We begin with the raw amino-acid sequence, 875 residues long: Metal transporter CNNM2 (875 aa).

The Extracellular segment spans residues 1–250 (MIGCGACEPE…TKMIVGEEKK (250 aa)). Asn112 carries N-linked (GlcNAc...) asparagine glycosylation. Positions 121–149 (TEHERRRHTPSERGLGGPAPPEPDSGPQR) are disordered. A helical transmembrane segment spans residues 251 to 271 (FLLPFWLQVIFISLLLCLSGM). Residues 251–431 (FLLPFWLQVI…DPYNDLVKEE (181 aa)) form the CNNM transmembrane domain. At 272–313 (FSGLNLGLMALDPMELRIVQNCGTEKEKNYAKRIEPVRRQGN) the chain is on the cytoplasmic side. Positions 314–334 (YLLCSLLLGNVLVNTTLTILL) form an intramembrane region, helical. At 335–338 (DDIA) the chain is on the cytoplasmic side. The chain crosses the membrane as a helical span at residues 339 to 359 (GSGLVAVVVSTIGIVIFGEIV). Residues 360–368 (PQAICSRHG) are Extracellular-facing. Residues 369-389 (LAVGANTIFLTKFFMMMTFPA) form a helical membrane-spanning segment. The Cytoplasmic segment spans residues 390 to 875 (SYPVSKLLDC…NHSLHSEGAI (486 aa)). CBS domains follow at residues 450-511 (MTPL…CTPL) and 518-584 (YNHP…ILDE). The tract at residues 741–763 (AGSPGENKSPPRPCGLNHSDSLS) is disordered. Ser761 is subject to Phosphoserine.

Belongs to the ACDP family. Isoform 1 and isoform 2 may interact with each other. Post-translationally, the N-terminus is cleaved within the endoplasmic reticulum. The signal peptidase complex seems to be involved in the processing, but the exact cleavage site has not been identified. Widely expressed, with highest levels in kidney, lung, spleen and testis. In the kidney, predominantly expressed in the distal convoluted tubule and, at lower levels, in the connecting tubule (at protein level).

Its subcellular location is the cell membrane. Its function is as follows. Divalent metal cation transporter. Mediates transport of divalent metal cations in an order of Mg(2+) &gt; Co(2+) &gt; Mn(2+) &gt; Sr(2+) &gt; Ba(2+) &gt; Cu(2+) &gt; Fe(2+). The sequence is that of Metal transporter CNNM2 (Cnnm2) from Mus musculus (Mouse).